Reading from the N-terminus, the 133-residue chain is Ribonuclease P protein component (133 aa).

This sequence belongs to the RnpA family. Consists of a catalytic RNA component (M1 or rnpB) and a protein subunit.

The enzyme catalyses Endonucleolytic cleavage of RNA, removing 5'-extranucleotides from tRNA precursor.. RNaseP catalyzes the removal of the 5'-leader sequence from pre-tRNA to produce the mature 5'-terminus. It can also cleave other RNA substrates such as 4.5S RNA. The protein component plays an auxiliary but essential role in vivo by binding to the 5'-leader sequence and broadening the substrate specificity of the ribozyme. The chain is Ribonuclease P protein component from Corynebacterium glutamicum (strain ATCC 13032 / DSM 20300 / JCM 1318 / BCRC 11384 / CCUG 27702 / LMG 3730 / NBRC 12168 / NCIMB 10025 / NRRL B-2784 / 534).